We begin with the raw amino-acid sequence, 290 residues long: Probable protein phosphatase 2C 20 (290 aa).

Residues 31-278 (AHGYDFVKGK…DDISCIVPCF (248 aa)) enclose the PPM-type phosphatase domain. Mn(2+) is bound by residues aspartate 68, glycine 69, aspartate 230, and aspartate 269.

It belongs to the PP2C family. The cofactor is Mg(2+). Mn(2+) serves as cofactor.

It catalyses the reaction O-phospho-L-seryl-[protein] + H2O = L-seryl-[protein] + phosphate. The enzyme catalyses O-phospho-L-threonyl-[protein] + H2O = L-threonyl-[protein] + phosphate. Functionally, may be involved in defense signaling. This Arabidopsis thaliana (Mouse-ear cress) protein is Probable protein phosphatase 2C 20 (PPC3-1.2).